We begin with the raw amino-acid sequence, 217 residues long: 3,4-dihydroxy-2-butanone 4-phosphate synthase (217 aa).

D-ribulose 5-phosphate contacts are provided by residues 37 to 38, D42, 150 to 154, and E174; these read RE and RGGHT. E38 is a binding site for Mg(2+). Residue H153 participates in Mg(2+) binding.

The protein belongs to the DHBP synthase family. As to quaternary structure, homodimer. Mg(2+) is required as a cofactor. It depends on Mn(2+) as a cofactor.

The catalysed reaction is D-ribulose 5-phosphate = (2S)-2-hydroxy-3-oxobutyl phosphate + formate + H(+). The protein operates within cofactor biosynthesis; riboflavin biosynthesis; 2-hydroxy-3-oxobutyl phosphate from D-ribulose 5-phosphate: step 1/1. Functionally, catalyzes the conversion of D-ribulose 5-phosphate to formate and 3,4-dihydroxy-2-butanone 4-phosphate. This chain is 3,4-dihydroxy-2-butanone 4-phosphate synthase, found in Escherichia coli O17:K52:H18 (strain UMN026 / ExPEC).